Consider the following 775-residue polypeptide: MNEEIGFLKNQLFADVKDLERKKKRRVPPEQRRRVFRACKHCRQKKIKCNGGQPCISCKTLNIECVYAQKSQNKTLSREYLEELSERQLCLEYIFSRMCPNFNLETKNLISISKKLSENENLPVSKIAEVTNELDTLVRINDQLSRNHISGTTEEMQSSSSLIAGEVQPGISFRDQLKVGKLEDTLYLGPTTSEAFIERLQNELELESISEDDLYSKRLSPSVSYSEFDEQLLLHARSLIPSKAVVEFLINSFFINVQTNLFVYHPHFFKCRLEIFLAMENQIDAGFLCILLMVLAFGNQYTAEQQEDVSKSNFHASNIGNRLFSAALSIFPLVLLQSDVSAVQSSLLIGLYLQSTIYEKSSFAYFGLAIKFAVALGLHKNSDDPSLTQNSKELRNRLLWSVFCIDRFVSMTTGRRPSIPLECISIPYPVILPDLEIPGSQSIVENMRAVINLAKLTNEICDSLYWNPSPSFESQVNSVRRIYARLELWKSDLHSSVVFDESAVQHPLFRSNAHVQMIYDNAIMLTTRVIMVKKLKDKDLTAENRRYIQLCVESATRVINIAHLLLTHKCLSSLSFFGLHVPFASAPILLLSLHYENSQDIQAVVTKLWQVLEFLSSRCEFARESLNYLKSFNKQLSRRNAPDINNPIADFQNSFQNWQSWVGDMSHGDMLSTFKLTGESSNGSNSTPNEAFQPFDQTSSLYNVPGLNKSYVSNQPSLLTPETFLPDPVLNLEVDKQWTAPTFLSWTELLGPTNVSEQSSHTAEQTSNLTLEKNG.

Positions 39–65 form a DNA-binding region, zn(2)-C6 fungal-type; sequence CKHCRQKKIKCNGGQPCISCKTLNIEC. Phosphoserine is present on serine 208. Disordered regions lie at residues 676-695 and 754-775; these read LTGESSNGSNSTPNEAFQPF and NVSEQSSHTAEQTSNLTLEKNG.

The protein localises to the nucleus. In terms of biological role, transcription factor that activates the nmt1 promoter. Regulation of thiamine repressible genes. Positively regulates conjugation during meiosis. The protein is Thiamine repressible genes regulatory protein thi1 (thi1) of Schizosaccharomyces pombe (strain 972 / ATCC 24843) (Fission yeast).